The chain runs to 692 residues: MTDNNQNNENHENSSENSKDHHEARAGAFERFTNRKKRFRENAQKNAESSNHETLSHHKKEHRPNKKPNNHHKPKHASQKTRNYAKEELDNNKVEGVTEILHVNERGTLGFHKELKKGVEANNKIQVEHLNPHYKMNLNSKASVKITPLGGLGEIGGNMMVIETPKSAIVIDAGMSFPKEGLFGVDILIPDFSYLHQIKDKIAGIIITHAHEDHIGATPYLFKELQFPLYGTPLSLGLIGSKFDEHGLKKYRSYFKIVEKRCPISVGEFIIEWIHITHSIIDSSALAIQTKAGTIIHTGDFKIDHTPVDNLPTDLYRLAHYGEKGVMLLLSDSTNSHKSGTTPSESTIAPAFDTLFKEAQGRVIMSTFSSNIHRVHQAIQYGIKYNRKIAVIGRSMEKNLDIARELGYIHLPYQSFIEANEVAKYPDNEVLIVTTGSQGETMSALYRMATDEHRHISIKPNDLVIISAKAIPGNEASVSAVLNFLIKKEAKVAYQEFDNIHVSGHAAQEEQKLMLRLIKPKFFLPVHGEYNHVARHKQTAIACGVPEKNIYLMEDGDQVEVGPAFIKKVGTIKSGKSYVDNQSNLSIDTSIVQQREEVASAGVFAATIFVNKNKQALLESSQFSSLGLVGFKDEKHLIKEIQGGLEVLLKSSNAEILNNPKKLEDHTRNFIRKALFKKFRKYPAIICHAHSF.

The segment at 1 to 91 (MTDNNQNNEN…RNYAKEELDN (91 aa)) is disordered. Residues 9-25 (ENHENSSENSKDHHEAR) are compositionally biased toward basic and acidic residues. Residues 57–79 (HHKKEHRPNKKPNNHHKPKHASQ) show a composition bias toward basic residues. N6-acetyllysine occurs at positions 135 and 141. Zn(2+) is bound by residues histidine 209, histidine 211, aspartate 213, histidine 214, histidine 278, and aspartate 300. N6-acetyllysine occurs at positions 324, 338, and 398. 501-505 (HVSGH) serves as a coordination point for substrate. Lysine 512 carries the post-translational modification N6-acetyllysine. Histidine 527 provides a ligand contact to Zn(2+). N6-acetyllysine is present on residues lysine 548, lysine 635, and lysine 650.

Belongs to the metallo-beta-lactamase superfamily. RNA-metabolizing metallo-beta-lactamase-like family. Bacterial RNase J subfamily. In terms of assembly, homodimer. Homotetramer; dimer of homodimers. Interacts with RNA helicase RhpA, might be a member of a minimal RNA degradosome complex. The cofactor is Zn(2+). In terms of processing, acetylated on nine lysine residues. Some of the residues are acetylated by multiple different mechanisms. RimL is partially responsible for the acetylation of Lys-324, Lys-398 and Lys-650. HPB8_1270 homolog is partially responsible for the acetylation of Lys-324, Lys-398, Lys-512 and Lys-650. Acetyl-phosphate-mediated non-enzymatic acetylation pathway takes part in the acetylation of Lys-135, Lys-324, Lys-398, Lys-512 and Lys-650. Acetylation of the remaining residues Lys-141, Lys-338, Lys-548 and Lys-635 occurs by a yet undetermined mechanism. Acetylation on a number of these residues is important for growth regulation and proper cell morphology.

The protein resides in the cytoplasm. Catalytic activity is regulated by the balance between homodimers and homotetramers, with homotetramers being the active forms of this enzyme. Acetylation allosterically regulates the homooligomerization state and hence the catalytic activity. An RNase that has 5'-3' exoribonuclease and endoribonuclease activity. Degrades 5'-monophosphorylated ssRNA and dsRNA, considerably more active on ssRNA. Association with RhpA significantly increases the dsRNase activity. Degrades RNA substrate with hairpin structures at both ends with low activity, but presence of RhpA significantly increases the activity on this substrate. Stimulates ATPase activity of RNA helicase RhpA. Involved in stabilization of mRNA but apparently not rRNA. This is Ribonuclease J from Helicobacter pylori (strain J99 / ATCC 700824) (Campylobacter pylori J99).